Consider the following 319-residue polypeptide: tRNA (guanine(9)-N(1))-methyltransferase Trmt10A (319 aa).

Disordered stretches follow at residues 16–87 (LSLN…KRQL) and 275–319 (AKIT…SLDS). The span at 17-33 (SLNNCPGTTPGTPMSKN) shows a compositional bias: polar residues. The short motif at 35–42 (LKKQRKLA) is the Nuclear localization signal element. Basic and acidic residues-rich tracts occupy residues 40–58 (KLAEFAELRKLRREREREK), 78–87 (SRKELKKRQL), and 276–302 (KITDKKEPNHCLEQQDEKQKQEAESDK). Residues 44–67 (FAELRKLRREREREKKKQKRREAK) are a coiled coil. One can recognise an SAM-dependent MTase TRM10-type domain in the interval 83-274 (KKRQLADGGK…ETIPMRKGAK (192 aa)).

The protein belongs to the class IV-like SAM-binding methyltransferase superfamily. TRM10 family.

It is found in the nucleus. The protein localises to the nucleolus. The protein resides in the chromosome. The catalysed reaction is guanosine(9) in tRNA + S-adenosyl-L-methionine = N(1)-methylguanosine(9) in tRNA + S-adenosyl-L-homocysteine + H(+). Functionally, S-adenosyl-L-methionine-dependent guanine N(1)-methyltransferase that catalyzes the formation of N(1)-methylguanine at position 9 (m1G9) in tRNAs. Modulates Mettl3-mediated N6-methyladenosine (m6A) methylation of mRNA 5'-UTRs and 3'-UTRs independent of its methyltransferase activity; influences mRNA stability and protein levels, in particular of Hsp70 chaperone proteins and other stress response proteins. Also regulates stability of transcripts encoding proteins involved in signaling processes and proteins involved in neurogenesis and axon guidance pathways. This chain is tRNA (guanine(9)-N(1))-methyltransferase Trmt10A, found in Drosophila melanogaster (Fruit fly).